We begin with the raw amino-acid sequence, 220 residues long: Antistasin (220 aa).

Positions 1–19 are cleaved as a signal peptide; sequence MNYLFVFLALSAAVTFANA. 6 consecutive Antistasin-like domains span residues 21–46, 54–79, 91–117, 120–145, 154–180, and 183–208; these read CNKI…ICKC, CSNR…ICRC, CDGL…KCEC, CKQF…TCKC, CDDL…KCEC, and CKNF…TCKC.

It belongs to the protease inhibitor I15 (antistasin) family. Gland cells. It is more strongly expressed in the head than in the gastric tissue.

Its subcellular location is the secreted. Its function is as follows. This highly disulfide-bonded protein is a potent inhibitor of factor Xa. Facilitates digestion of tissues and may also protect the gastric tissues from its own digestive enzymes. May have therapeutic utility as an anticoagulant. Also exhibits a strong metastatic activity. The polypeptide is Antistasin (Hydra vulgaris (Hydra)).